Consider the following 67-residue polypeptide: ATP synthase F(0) complex subunit 8 (67 aa).

A helical transmembrane segment spans residues 8 to 24 (TWFITIVSMLLSLFILM). Lysine 54 is subject to N6-acetyllysine; alternate. An N6-succinyllysine; alternate modification is found at lysine 54. N6-acetyllysine is present on lysine 57.

Belongs to the ATPase protein 8 family. Component of the ATP synthase complex composed at least of ATP5F1A/subunit alpha, ATP5F1B/subunit beta, ATP5MC1/subunit c (homooctomer), MT-ATP6/subunit a, MT-ATP8/subunit 8, ATP5ME/subunit e, ATP5MF/subunit f, ATP5MG/subunit g, ATP5MK/subunit k, ATP5MJ/subunit j, ATP5F1C/subunit gamma, ATP5F1D/subunit delta, ATP5F1E/subunit epsilon, ATP5PF/subunit F6, ATP5PB/subunit b, ATP5PD/subunit d, ATP5PO/subunit OSCP. ATP synthase complex consists of a soluble F(1) head domain (subunits alpha(3) and beta(3)) - the catalytic core - and a membrane F(0) domain - the membrane proton channel (subunits c, a, 8, e, f, g, k and j). These two domains are linked by a central stalk (subunits gamma, delta, and epsilon) rotating inside the F1 region and a stationary peripheral stalk (subunits F6, b, d, and OSCP). Interacts with PRICKLE3.

Its subcellular location is the mitochondrion membrane. Subunit 8, of the mitochondrial membrane ATP synthase complex (F(1)F(0) ATP synthase or Complex V) that produces ATP from ADP in the presence of a proton gradient across the membrane which is generated by electron transport complexes of the respiratory chain. ATP synthase complex consist of a soluble F(1) head domain - the catalytic core - and a membrane F(1) domain - the membrane proton channel. These two domains are linked by a central stalk rotating inside the F(1) region and a stationary peripheral stalk. During catalysis, ATP synthesis in the catalytic domain of F(1) is coupled via a rotary mechanism of the central stalk subunits to proton translocation. In vivo, can only synthesize ATP although its ATP hydrolase activity can be activated artificially in vitro. Part of the complex F(0) domain. The protein is ATP synthase F(0) complex subunit 8 of Dasypus novemcinctus (Nine-banded armadillo).